A 694-amino-acid chain; its full sequence is Follicle-stimulating hormone receptor (694 aa).

Positions 1–17 (MALLLVSLLAFLGSGAG) are cleaved as a signal peptide. 2 disulfides stabilise this stretch: C18/C25 and C23/C32. Residues 18-46 (CHHWLCHCSDRVFLCQDSKVTEIPPDLPR) enclose the LRRNT domain. Topologically, residues 18–365 (CHHWLCHCSD…EDIMGYNILR (348 aa)) are extracellular. 9 LRR repeats span residues 49–72 (IELRFVLTKLRVIPQGSFSGFKDL), 73–97 (EKIEISQNDVLEVIEADVFSNLPKL), 98–118 (HEIRIERANTLLYINPEAFQN), 119–143 (LPNLRYLLISNTGIKHLPVVHKIQS), 144–169 (LQKVLLDIQDNINLHTIARNSFMGLS), 170–192 (FDSLILWLNKNGIQEIHNCAFNG), 193–216 (TQLDELNLSDNNNLEELPNDVFRG), 217–240 (ASGPVILDISRTKVHSLPSHGLEN), and 241–259 (LKKLRARSTYSLKKLPSLD). N191 and N199 each carry an N-linked (GlcNAc...) asparagine glycan. Disulfide bonds link C275/C345, C276/C292, C276/C355, and C292/C337. N293 and N311 each carry an N-linked (GlcNAc...) asparagine glycan. A helical transmembrane segment spans residues 366–386 (VLIWFISILAITGNITVLVIL). Residues 387–397 (TTSQYKLTVPR) are Cytoplasmic-facing. Residues 398 to 420 (FLMCNLAFADLCIGIYLLPIASV) traverse the membrane as a helical segment. Topologically, residues 421 to 442 (DIHTKSQYHNYAIDWQTAVGCD) are extracellular. Residues C441 and C516 are joined by a disulfide bond. Residues 443–464 (AAGFFTAFASELSVYTLTAIPL) traverse the membrane as a helical segment. Over 465–484 (ERWHTITHAMQLERKVQLRH) the chain is Cytoplasmic. A helical membrane pass occupies residues 485-507 (AASVMVMGWVFAFAAALLPIFGV). The Extracellular segment spans residues 508–527 (SSYMKVSICLPIDIDSPLSQ). Residues 528-549 (LYVMALLVLNVLAFVVICGCYT) traverse the membrane as a helical segment. Residues 550 to 572 (HIYLTVRNPNIVSSSSDTKIAKR) lie on the Cytoplasmic side of the membrane. A helical membrane pass occupies residues 573 to 596 (MATLIFTDFLCMAPISLFAISASL). Over 597–607 (KAPLITVSKAK) the chain is Extracellular. The helical transmembrane segment at 608 to 629 (ILLVLFYPINSCANPFLYAIFT) threads the bilayer. Residues 630–694 (KNFRRDFFIL…LVPLSQSAHN (65 aa)) lie on the Cytoplasmic side of the membrane.

Belongs to the G-protein coupled receptor 1 family. FSH/LSH/TSH subfamily. As to quaternary structure, homotrimer. Functions as a homotrimer binding the FSH hormone heterodimer composed of CGA and FSHB. Interacts with ARRB2. Interacts with APPL2; interaction is independent of follicle stimulating hormone stimulation. N-glycosylated; indirectly required for FSH-binding, possibly via a conformational change that allows high affinity binding of hormone.

Its subcellular location is the cell membrane. Functionally, g protein-coupled receptor for follitropin, the follicle-stimulating hormone. Through cAMP production activates the downstream PI3K-AKT and ERK1/ERK2 signaling pathways. The chain is Follicle-stimulating hormone receptor (FSHR) from Mesocricetus auratus (Golden hamster).